Consider the following 680-residue polypeptide: Tripartite terminase subunit 1 (680 aa).

Residues cysteine 180–histidine 208 form a C3H1-type zinc finger. Tyrosine 610–asparagine 617 is a binding site for ATP.

The protein belongs to the herpesviridae TRM1 protein family. In terms of assembly, associates with TRM2 and TRM3 to form the tripartite terminase complex. Interacts with portal protein.

It localises to the host nucleus. In terms of biological role, component of the molecular motor that translocates viral genomic DNA in empty capsid during DNA packaging. Forms a tripartite terminase complex together with TRM2 and TRM3 in the host cytoplasm. Once the complex reaches the host nucleus, it interacts with the capsid portal vertex. This portal forms a ring in which genomic DNA is translocated into the capsid. TRM1 carries an endonuclease activity that plays an important role for the cleavage of concatemeric viral DNA into unit length genomes. The protein is Tripartite terminase subunit 1 of Alcelaphine herpesvirus 1 (strain C500) (AlHV-1).